Here is a 325-residue protein sequence, read N- to C-terminus: Glutarate 2-hydroxylase (325 aa).

Positions 160, 162, and 292 each coordinate Fe cation.

The protein belongs to the glutarate hydroxylase family. As to quaternary structure, homotetramer. Fe(2+) serves as cofactor.

It catalyses the reaction glutarate + 2-oxoglutarate + O2 = (S)-2-hydroxyglutarate + succinate + CO2. It participates in amino-acid degradation. Acts as an alpha-ketoglutarate-dependent dioxygenase catalyzing hydroxylation of glutarate (GA) to L-2-hydroxyglutarate (L2HG). Functions in a L-lysine degradation pathway that proceeds via cadaverine, glutarate and L-2-hydroxyglutarate. The protein is Glutarate 2-hydroxylase of Escherichia coli O127:H6 (strain E2348/69 / EPEC).